The sequence spans 431 residues: Serine hydroxymethyltransferase (431 aa).

A (6S)-5,6,7,8-tetrahydrofolate-binding site is contributed by 122–124 (GHI). Lys-228 carries the N6-(pyridoxal phosphate)lysine modification. Glu-245 serves as a coordination point for (6S)-5,6,7,8-tetrahydrofolate.

It belongs to the SHMT family. Homodimer. The cofactor is pyridoxal 5'-phosphate.

Its subcellular location is the cytoplasm. It participates in amino-acid biosynthesis; glycine biosynthesis; glycine from L-serine: step 1/1. In terms of biological role, catalyzes the reversible interconversion of serine and glycine with a modified folate serving as the one-carbon carrier. Also exhibits a pteridine-independent aldolase activity toward beta-hydroxyamino acids, producing glycine and aldehydes, via a retro-aldol mechanism. In Thermococcus kodakarensis (strain ATCC BAA-918 / JCM 12380 / KOD1) (Pyrococcus kodakaraensis (strain KOD1)), this protein is Serine hydroxymethyltransferase.